The sequence spans 245 residues: 14-3-3 protein zeta (245 aa).

Belongs to the 14-3-3 family. In terms of assembly, homodimer.

The protein localises to the cytoplasm. Its function is as follows. Adapter protein implicated in the regulation of a large spectrum of both general and specialized signaling pathways. Binds to a large number of partners, usually by recognition of a phosphoserine or phosphothreonine motif. Binding generally results in the modulation of the activity of the binding partner. In Xenopus tropicalis (Western clawed frog), this protein is 14-3-3 protein zeta (ywhaz).